We begin with the raw amino-acid sequence, 142 residues long: Putative pre-16S rRNA nuclease (142 aa).

It belongs to the YqgF nuclease family.

Its subcellular location is the cytoplasm. Its function is as follows. Could be a nuclease involved in processing of the 5'-end of pre-16S rRNA. This Staphylococcus aureus (strain bovine RF122 / ET3-1) protein is Putative pre-16S rRNA nuclease.